The primary structure comprises 296 residues: tRNA dimethylallyltransferase (296 aa).

An ATP-binding site is contributed by 2–9 (GPTASGKT). 4-9 (TASGKT) is a binding site for substrate. Interaction with substrate tRNA regions lie at residues 27 to 30 (DSAL), 151 to 155 (QRLSR), and 232 to 237 (RCVGYR).

The protein belongs to the IPP transferase family. As to quaternary structure, monomer. It depends on Mg(2+) as a cofactor.

It carries out the reaction adenosine(37) in tRNA + dimethylallyl diphosphate = N(6)-dimethylallyladenosine(37) in tRNA + diphosphate. In terms of biological role, catalyzes the transfer of a dimethylallyl group onto the adenine at position 37 in tRNAs that read codons beginning with uridine, leading to the formation of N6-(dimethylallyl)adenosine (i(6)A). The chain is tRNA dimethylallyltransferase from Shewanella frigidimarina (strain NCIMB 400).